Consider the following 918-residue polypeptide: Eukaryotic translation initiation factor 3 subunit C (918 aa).

A disordered region spans residues 1–174; it reads MSRFFKGGSS…EEEGRRVVKS (174 aa). Phosphoserine occurs at positions 10, 12, 16, 19, and 20. Composition is skewed to acidic residues over residues 36 to 47, 54 to 67, and 79 to 128; these read SSSEEESSEEES, ESSE…ESEV, and EDSE…ESDE. T667 carries the phosphothreonine modification. The 176-residue stretch at 681 to 856 folds into the PCI domain; sequence FHMHINLELL…GAIIFERVEI (176 aa). The interval 879–918 is disordered; that stretch reads KLYEQKTQHTNPQENRRRDKGGSVKRRNERTENRNRSDMN. The span at 907–918 shows a compositional bias: basic and acidic residues; sequence ERTENRNRSDMN.

This sequence belongs to the eIF-3 subunit C family. In terms of assembly, component of the eukaryotic translation initiation factor 3 (eIF-3) complex. The eIF-3 complex appears to include tif32/eif3a, SPAC25G10.08/eif3b, tif33/eif3c, SPBC4C3.07/eif3f, tif35/eif3g and sum1/eif3i. This set of common subunits may also associate exclusively with either moe1/eif3d and int6/eif3e, or with SPAC821.05/eif3h and SPAC1751.03/eif3m. The eIF-3 complex may also include SPAC3A12.13c/eif3j.

It is found in the cytoplasm. Its function is as follows. Component of the eukaryotic translation initiation factor 3 (eIF-3) complex, which is involved in protein synthesis of a specialized repertoire of mRNAs and, together with other initiation factors, stimulates binding of mRNA and methionyl-tRNAi to the 40S ribosome. The eIF-3 complex specifically targets and initiates translation of a subset of mRNAs involved in cell proliferation. This chain is Eukaryotic translation initiation factor 3 subunit C (nip1), found in Schizosaccharomyces pombe (strain 972 / ATCC 24843) (Fission yeast).